Here is a 360-residue protein sequence, read N- to C-terminus: Peptide chain release factor 1 (360 aa).

Gln235 carries the N5-methylglutamine modification.

This sequence belongs to the prokaryotic/mitochondrial release factor family. In terms of processing, methylated by PrmC. Methylation increases the termination efficiency of RF1.

The protein localises to the cytoplasm. Its function is as follows. Peptide chain release factor 1 directs the termination of translation in response to the peptide chain termination codons UAG and UAA. The chain is Peptide chain release factor 1 from Burkholderia mallei (strain NCTC 10247).